Reading from the N-terminus, the 257-residue chain is Imidazole glycerol phosphate synthase subunit HisF (257 aa).

Catalysis depends on residues Asp12 and Asp131.

Belongs to the HisA/HisF family. Heterodimer of HisH and HisF.

The protein resides in the cytoplasm. The catalysed reaction is 5-[(5-phospho-1-deoxy-D-ribulos-1-ylimino)methylamino]-1-(5-phospho-beta-D-ribosyl)imidazole-4-carboxamide + L-glutamine = D-erythro-1-(imidazol-4-yl)glycerol 3-phosphate + 5-amino-1-(5-phospho-beta-D-ribosyl)imidazole-4-carboxamide + L-glutamate + H(+). It functions in the pathway amino-acid biosynthesis; L-histidine biosynthesis; L-histidine from 5-phospho-alpha-D-ribose 1-diphosphate: step 5/9. Functionally, IGPS catalyzes the conversion of PRFAR and glutamine to IGP, AICAR and glutamate. The HisF subunit catalyzes the cyclization activity that produces IGP and AICAR from PRFAR using the ammonia provided by the HisH subunit. The protein is Imidazole glycerol phosphate synthase subunit HisF of Marinomonas sp. (strain MWYL1).